The sequence spans 134 residues: Cell division protein SepF 1 (134 aa).

This sequence belongs to the SepF family. Homodimer. Interacts with FtsZ.

It is found in the cytoplasm. Cell division protein that is part of the divisome complex and is recruited early to the Z-ring. Probably stimulates Z-ring formation, perhaps through the cross-linking of FtsZ protofilaments. Its function overlaps with FtsA. The polypeptide is Cell division protein SepF 1 (Streptomyces avermitilis (strain ATCC 31267 / DSM 46492 / JCM 5070 / NBRC 14893 / NCIMB 12804 / NRRL 8165 / MA-4680)).